The chain runs to 270 residues: Elongation factor Tu (270 aa).

Positions 1–103 constitute a tr-type G domain; it reads GILVVSAADG…AVDDYIPTPE (103 aa). 35 to 38 is a GTP binding site; sequence NKVD.

It belongs to the TRAFAC class translation factor GTPase superfamily. Classic translation factor GTPase family. EF-Tu/EF-1A subfamily. Monomer.

It is found in the cytoplasm. The enzyme catalyses GTP + H2O = GDP + phosphate + H(+). Functionally, GTP hydrolase that promotes the GTP-dependent binding of aminoacyl-tRNA to the A-site of ribosomes during protein biosynthesis. The polypeptide is Elongation factor Tu (tuf) (Staphylococcus warneri).